A 63-amino-acid chain; its full sequence is Large ribosomal subunit protein uL30 (63 aa).

The protein belongs to the universal ribosomal protein uL30 family. As to quaternary structure, part of the 50S ribosomal subunit.

This chain is Large ribosomal subunit protein uL30, found in Rhodospirillum rubrum (strain ATCC 11170 / ATH 1.1.1 / DSM 467 / LMG 4362 / NCIMB 8255 / S1).